The following is a 547-amino-acid chain: Varicidin biosynthesis cluster MFS-type transporer (547 aa).

The span at 1 to 17 shows a compositional bias: polar residues; that stretch reads MTTSTSKNAISKSSQED. Positions 1 to 33 are disordered; the sequence is MTTSTSKNAISKSSQEDLCSDTKDKGSSGGGNE. 11 helical membrane-spanning segments follow: residues 47-67, 156-176, 183-203, 224-244, 252-272, 296-316, 330-350, 360-382, 392-412, 422-442, and 503-523; these read LVLL…VCIS, LAPS…SVFT, WCFW…FLFV, ALGT…LQWG, SWRV…WLYV, ILFT…VPIW, INFL…GTLV, GQWR…WRYN, AGTL…PFIA, ISLG…VFLA, and CFLV…GMEW.

The protein belongs to the major facilitator superfamily. TCR/Tet family.

The protein resides in the cell membrane. In terms of biological role, MFS-type transporer; part of the gene cluster that mediates the biosynthesis of varicidin A, an antifungal natural product containing a cis-octahydrodecalin core. The protein is Varicidin biosynthesis cluster MFS-type transporer of Talaromyces variabilis (Penicillium variabile).